The sequence spans 570 residues: uncharacterized protein (570 aa).

A compositionally biased stretch (low complexity) spans 1-15; sequence MTESIISSRTASISS. The disordered stretch occupies residues 1 to 34; that stretch reads MTESIISSRTASISSKEGYEIRQGSTDSSSLDLE. Position 14 is a phosphoserine (Ser-14). The next 12 helical transmembrane spans lie at 96–116, 141–161, 163–183, 198–218, 229–249, 261–281, 328–348, 369–389, 397–417, 423–443, 457–477, and 485–505; these read WKLYIYLLLMLGFLDMMLFIG, NLNTLFYVGYIVGQFPGHYIM, TFPLGKFVGLVTFSWSVIVFL, FFLGFTESCLLPAMEATMGMF, PVFWISCLSCGIPAGFIAYGL, LFMIITGGITFFLSIFLFFYY, PITWLFTFAAFTLMLSNNLAY, VALAGYNTVSAIIATFAMYLI, AMFWMLPSITGGIAFVALPWS, LATMIIASDFGITYIIALGWT, GLMFMVGYAIANIISPQLWQS, and PAWIVQIVVAWFVTPIIYLVA.

It belongs to the major facilitator superfamily. Allantoate permease family.

It localises to the endoplasmic reticulum. The protein resides in the membrane. This is an uncharacterized protein from Schizosaccharomyces pombe (strain 972 / ATCC 24843) (Fission yeast).